The following is a 155-amino-acid chain: Small ribosomal subunit protein uS7 (155 aa).

Belongs to the universal ribosomal protein uS7 family. In terms of assembly, part of the 30S ribosomal subunit. Contacts proteins S9 and S11.

Functionally, one of the primary rRNA binding proteins, it binds directly to 16S rRNA where it nucleates assembly of the head domain of the 30S subunit. Is located at the subunit interface close to the decoding center, probably blocks exit of the E-site tRNA. In Corynebacterium efficiens (strain DSM 44549 / YS-314 / AJ 12310 / JCM 11189 / NBRC 100395), this protein is Small ribosomal subunit protein uS7.